Here is a 285-residue protein sequence, read N- to C-terminus: Ubiquinone biosynthesis protein COQ4, mitochondrial (285 aa).

Residues 1–11 (MPPTVRQGIRT) constitute a mitochondrion transit peptide. Zn(2+)-binding residues include His-166, Asp-167, His-170, and Glu-182.

It belongs to the COQ4 family. As to quaternary structure, component of a multi-subunit COQ enzyme complex, composed of at least COQ3, COQ4, COQ5, COQ6, COQ7 and COQ9. Requires Zn(2+) as cofactor.

The protein localises to the mitochondrion inner membrane. It carries out the reaction a 4-hydroxy-3-methoxy-5-(all-trans-polyprenyl)benzoate + H(+) = a 2-methoxy-6-(all-trans-polyprenyl)phenol + CO2. The protein operates within cofactor biosynthesis; ubiquinone biosynthesis. In terms of biological role, lyase that catalyzes the C1-decarboxylation of 4-hydroxy-3-methoxy-5-(all-trans-polyprenyl)benzoic acid into 2-methoxy-6-(all-trans-polyprenyl)phenol during ubiquinone biosynthesis. This Paracoccidioides brasiliensis (strain Pb18) protein is Ubiquinone biosynthesis protein COQ4, mitochondrial.